The sequence spans 533 residues: Retinoid isomerohydrolase (533 aa).

N-acetylserine is present on Ser-2. Residues Thr-101 and Thr-105 each carry the phosphothreonine modification. Cys-112 carries S-palmitoyl cysteine; in membrane form lipidation. At Lys-113 the chain carries N6-acetyllysine. Ser-117 bears the Phosphoserine mark. Position 180 (His-180) interacts with Fe cation. The S-palmitoyl cysteine; in membrane form moiety is linked to residue Cys-231. The Fe cation site is built by His-241 and His-313. 2 S-palmitoyl cysteine; in membrane form lipidation sites follow: Cys-329 and Cys-330. His-527 lines the Fe cation pocket.

Belongs to the carotenoid oxygenase family. In terms of assembly, interacts with MYO7A; this mediates light-dependent intracellular transport of RPE65. Fe(2+) is required as a cofactor. Palmitoylation by LRAT regulates ligand binding specificity; the palmitoylated form (membrane form) specifically binds all-trans-retinyl-palmitate, while the soluble unpalmitoylated form binds all-trans-retinol (vitamin A). In terms of tissue distribution, retinal pigment epithelium specific.

The protein resides in the cytoplasm. It is found in the cell membrane. The protein localises to the microsome membrane. The catalysed reaction is an all-trans-retinyl ester + H2O = 11-cis-retinol + a fatty acid + H(+). It catalyses the reaction lutein = (3R,3'S)-zeaxanthin. The enzyme catalyses all-trans-retinyl hexadecanoate + H2O = 11-cis-retinol + hexadecanoate + H(+). In terms of biological role, critical isomerohydrolase in the retinoid cycle involved in regeneration of 11-cis-retinal, the chromophore of rod and cone opsins. Catalyzes the cleavage and isomerization of all-trans-retinyl fatty acid esters to 11-cis-retinol which is further oxidized by 11-cis retinol dehydrogenase to 11-cis-retinal for use as visual chromophore. Essential for the production of 11-cis retinal for both rod and cone photoreceptors. Also capable of catalyzing the isomerization of lutein to meso-zeaxanthin an eye-specific carotenoid. The soluble form binds vitamin A (all-trans-retinol), making it available for LRAT processing to all-trans-retinyl ester. The membrane form, palmitoylated by LRAT, binds all-trans-retinyl esters, making them available for IMH (isomerohydrolase) processing to all-cis-retinol. The soluble form is regenerated by transferring its palmitoyl groups onto 11-cis-retinol, a reaction catalyzed by LRAT. The chain is Retinoid isomerohydrolase (RPE65) from Canis lupus familiaris (Dog).